A 295-amino-acid polypeptide reads, in one-letter code: GATA transcription factor 18 (295 aa).

Residues 148–202 (SLLARRCANCDTTSTPLWRNGPRGPKSLCNACGIRFKKEERRTTAATGNTVVGAA) form a GATA-type zinc finger.

This sequence belongs to the type IV zinc-finger family. Class B subfamily. As to quaternary structure, homodimer. Forms heterodimers with GATA19, GATA22 and GATA21. Interacts with JAG. Binds to AGO10/PNH. In terms of tissue distribution, expressed in vegetative and inflorescence shoot apical meristems (SAMs), axillary (SAMs), floral meristems, developing ovules and stamens, vascular tissues, and in the embryo.

It localises to the nucleus. Transcriptional factor that specifically binds 5'-GATA-3' or 5'-GAT-3' motifs within gene promoters (including its own promoter and GATA21 promoter), thus regulating the expression of genes mostly involved in hormone responses and floral organ specification (including genes regulating hormones responses). Regulates both flower and shoot apical meristem (SAM) development, especially for establishing organ boundaries in shoots and flowers, probably by controlling the number and position of WUS-expressing cells. Coregulates, with AGO10/PNH, the shoot apical meristem (SAM) organization. Regulates floral organ development via the promotion of JAG and NPR5/BOP2 expression. Modulates cytokinin homeostasis in organ boundaries by regulating CKX3 expression. Involved in cell proliferation and differentiation. Required to position the inductive proembryo boundary via the regulation of gene expression and for early embryonic development. Together with GIF1/AN3, mediates cotyledon identity by preventing ectopic root formation through the repression of PLT1 expression. This is GATA transcription factor 18 from Arabidopsis thaliana (Mouse-ear cress).